Consider the following 315-residue polypeptide: Ribosomal RNA small subunit methyltransferase H (315 aa).

S-adenosyl-L-methionine is bound by residues Gly-37–His-39, Asp-57, Phe-83, Asp-105, and Gln-112.

The protein belongs to the methyltransferase superfamily. RsmH family.

It is found in the cytoplasm. It catalyses the reaction cytidine(1402) in 16S rRNA + S-adenosyl-L-methionine = N(4)-methylcytidine(1402) in 16S rRNA + S-adenosyl-L-homocysteine + H(+). Specifically methylates the N4 position of cytidine in position 1402 (C1402) of 16S rRNA. In Pseudomonas putida (strain W619), this protein is Ribosomal RNA small subunit methyltransferase H.